A 369-amino-acid polypeptide reads, in one-letter code: Phospho-N-acetylmuramoyl-pentapeptide-transferase (369 aa).

10 consecutive transmembrane segments (helical) span residues Ile2–Phe22, Ala55–Ile75, Pro82–Leu102, Ala120–Ala140, Leu163–Ile183, Leu196–Ile216, Pro240–Trp260, Ile267–Leu287, Ile292–Val312, and Ile349–Phe369.

This sequence belongs to the glycosyltransferase 4 family. MraY subfamily. The cofactor is Mg(2+).

It is found in the cell membrane. It carries out the reaction UDP-N-acetyl-alpha-D-muramoyl-L-alanyl-gamma-D-glutamyl-meso-2,6-diaminopimeloyl-D-alanyl-D-alanine + di-trans,octa-cis-undecaprenyl phosphate = di-trans,octa-cis-undecaprenyl diphospho-N-acetyl-alpha-D-muramoyl-L-alanyl-D-glutamyl-meso-2,6-diaminopimeloyl-D-alanyl-D-alanine + UMP. The protein operates within cell wall biogenesis; peptidoglycan biosynthesis. In terms of biological role, catalyzes the initial step of the lipid cycle reactions in the biosynthesis of the cell wall peptidoglycan: transfers peptidoglycan precursor phospho-MurNAc-pentapeptide from UDP-MurNAc-pentapeptide onto the lipid carrier undecaprenyl phosphate, yielding undecaprenyl-pyrophosphoryl-MurNAc-pentapeptide, known as lipid I. The protein is Phospho-N-acetylmuramoyl-pentapeptide-transferase of Renibacterium salmoninarum (strain ATCC 33209 / DSM 20767 / JCM 11484 / NBRC 15589 / NCIMB 2235).